A 398-amino-acid polypeptide reads, in one-letter code: MAKEKYDRSKPHVNIGTIGHVDHGKTTLTAAITTVLARRLPSAVNTPKDYASIDAAPEERERGITINTAHVEYETEKRHYAHIDAPGHADYVKNMITGAAQMDGAILVVASTDGPMPQTREHILLSRQVGVKHLIVFMNKVDLVDDEELLELVEMEIRDLLSEYDFPGDDIPVIQGSALKALEGDSKYEDIIMDLMNTVDEYIPEPERDTDKPLLLPVEDVFSITGRGTVASGRIDRGVVRVNDEVEIVGLKEESQKAVVTGVEMFRKQLDEGIAGDNVGVLLRGIQRDEIERGQVLAAPGSIKPHTKFKGEVYILTKEEGGRHTPFFNNYRPQFYFRTTDVTGSIELPAGTEMVMPGDNVTIDVELIHPIAVEKGTTFSIREGGRTVGSGIVTEIEA.

The region spanning 10–207 (KPHVNIGTIG…TVDEYIPEPE (198 aa)) is the tr-type G domain. The G1 stretch occupies residues 19-26 (GHVDHGKT). Position 19–26 (19–26 (GHVDHGKT)) interacts with GTP. Thr-26 is a binding site for Mg(2+). A G2 region spans residues 63–67 (GITIN). Residues 84–87 (DAPG) are G3. GTP-binding positions include 84 to 88 (DAPGH) and 139 to 142 (NKVD). The G4 stretch occupies residues 139 to 142 (NKVD). Residues 177 to 179 (SAL) form a G5 region.

The protein belongs to the TRAFAC class translation factor GTPase superfamily. Classic translation factor GTPase family. EF-Tu/EF-1A subfamily. Monomer.

The protein localises to the cytoplasm. It carries out the reaction GTP + H2O = GDP + phosphate + H(+). In terms of biological role, GTP hydrolase that promotes the GTP-dependent binding of aminoacyl-tRNA to the A-site of ribosomes during protein biosynthesis. In Streptococcus thermophilus (strain CNRZ 1066), this protein is Elongation factor Tu.